The following is a 487-amino-acid chain: Acetyl-coenzyme A carboxylase carboxyl transferase subunit beta, chloroplastic (487 aa).

Residues 223 to 487 (LWIQCDNCYG…FFPLKKNEIK (265 aa)) enclose the CoA carboxyltransferase N-terminal domain. Residues Cys227, Cys230, Cys243, and Cys246 each coordinate Zn(2+). The C4-type zinc-finger motif lies at 227–246 (CDNCYGLMYKKVKMNVCEQC).

It belongs to the AccD/PCCB family. As to quaternary structure, acetyl-CoA carboxylase is a heterohexamer composed of biotin carboxyl carrier protein, biotin carboxylase and 2 subunits each of ACCase subunit alpha and ACCase plastid-coded subunit beta (accD). The cofactor is Zn(2+).

It localises to the plastid. The protein localises to the chloroplast stroma. The enzyme catalyses N(6)-carboxybiotinyl-L-lysyl-[protein] + acetyl-CoA = N(6)-biotinyl-L-lysyl-[protein] + malonyl-CoA. Its pathway is lipid metabolism; malonyl-CoA biosynthesis; malonyl-CoA from acetyl-CoA: step 1/1. Component of the acetyl coenzyme A carboxylase (ACC) complex. Biotin carboxylase (BC) catalyzes the carboxylation of biotin on its carrier protein (BCCP) and then the CO(2) group is transferred by the transcarboxylase to acetyl-CoA to form malonyl-CoA. This chain is Acetyl-coenzyme A carboxylase carboxyl transferase subunit beta, chloroplastic, found in Lepidium virginicum (Virginia pepperweed).